The primary structure comprises 188 residues: dCTP deaminase (188 aa).

DCTP is bound by residues 111–116 (KSTYAR), 135–137 (TLE), Gln156, Tyr170, and Gln180. The active-site Proton donor/acceptor is Glu137.

It belongs to the dCTP deaminase family. Homotrimer.

The enzyme catalyses dCTP + H2O + H(+) = dUTP + NH4(+). It functions in the pathway pyrimidine metabolism; dUMP biosynthesis; dUMP from dCTP (dUTP route): step 1/2. In terms of biological role, catalyzes the deamination of dCTP to dUTP. This Neisseria meningitidis serogroup B (strain ATCC BAA-335 / MC58) protein is dCTP deaminase.